A 343-amino-acid polypeptide reads, in one-letter code: Dihydroorotase (343 aa).

Positions 14 and 16 each coordinate Zn(2+). Residues 16–18 (HVR) and N42 each bind substrate. Zn(2+) contacts are provided by K98, H135, and H173. K98 carries the post-translational modification N6-carboxylysine. H135 contacts substrate. A substrate-binding site is contributed by L219. Residue D247 participates in Zn(2+) binding. D247 is a catalytic residue. Residues H251 and A263 each coordinate substrate.

This sequence belongs to the metallo-dependent hydrolases superfamily. DHOase family. Class II DHOase subfamily. As to quaternary structure, homodimer. It depends on Zn(2+) as a cofactor.

It catalyses the reaction (S)-dihydroorotate + H2O = N-carbamoyl-L-aspartate + H(+). The protein operates within pyrimidine metabolism; UMP biosynthesis via de novo pathway; (S)-dihydroorotate from bicarbonate: step 3/3. Catalyzes the reversible cyclization of carbamoyl aspartate to dihydroorotate. The polypeptide is Dihydroorotase (Marinobacter nauticus (strain ATCC 700491 / DSM 11845 / VT8) (Marinobacter aquaeolei)).